The primary structure comprises 261 residues: 5'-nucleotidase SurE (261 aa).

D8, D9, S43, and N96 together coordinate a divalent metal cation.

The protein belongs to the SurE nucleotidase family. A divalent metal cation serves as cofactor.

The protein localises to the cytoplasm. The catalysed reaction is a ribonucleoside 5'-phosphate + H2O = a ribonucleoside + phosphate. In terms of biological role, nucleotidase that shows phosphatase activity on nucleoside 5'-monophosphates. The chain is 5'-nucleotidase SurE from Cereibacter sphaeroides (strain KD131 / KCTC 12085) (Rhodobacter sphaeroides).